The primary structure comprises 582 residues: tRNA-guanine(15) transglycosylase (582 aa).

Asp95 (nucleophile) is an active-site residue. Asp130 and Gly196 together coordinate substrate. Positions 279, 281, and 284 each coordinate Zn(2+). One can recognise a PUA domain in the interval 507–582; that stretch reads RMRVVVNKEA…RAVKVRKGVE (76 aa).

It belongs to the archaeosine tRNA-ribosyltransferase family. As to quaternary structure, homodimer. It depends on Zn(2+) as a cofactor.

It carries out the reaction guanosine(15) in tRNA + 7-cyano-7-deazaguanine = 7-cyano-7-carbaguanosine(15) in tRNA + guanine. Its pathway is tRNA modification; archaeosine-tRNA biosynthesis. Exchanges the guanine residue with 7-cyano-7-deazaguanine (preQ0) at position 15 in the dihydrouridine loop (D-loop) of archaeal tRNAs. The sequence is that of tRNA-guanine(15) transglycosylase (tgtA) from Pyrococcus horikoshii (strain ATCC 700860 / DSM 12428 / JCM 9974 / NBRC 100139 / OT-3).